A 428-amino-acid chain; its full sequence is Histidinol dehydrogenase (428 aa).

Substrate-binding residues include Ser-232, Gln-254, and His-257. Residues Gln-254 and His-257 each contribute to the Zn(2+) site. Active-site proton acceptor residues include Glu-324 and His-325. Positions 325, 358, 412, and 417 each coordinate substrate. Asp-358 contributes to the Zn(2+) binding site. His-417 contacts Zn(2+).

It belongs to the histidinol dehydrogenase family. It depends on Zn(2+) as a cofactor.

The enzyme catalyses L-histidinol + 2 NAD(+) + H2O = L-histidine + 2 NADH + 3 H(+). Its pathway is amino-acid biosynthesis; L-histidine biosynthesis; L-histidine from 5-phospho-alpha-D-ribose 1-diphosphate: step 9/9. Functionally, catalyzes the sequential NAD-dependent oxidations of L-histidinol to L-histidinaldehyde and then to L-histidine. The sequence is that of Histidinol dehydrogenase from Thermotoga maritima (strain ATCC 43589 / DSM 3109 / JCM 10099 / NBRC 100826 / MSB8).